A 274-amino-acid polypeptide reads, in one-letter code: KLKDKTVGIVGAGNTGSAVAKCLQAYGVTVLLHDPVIQDSDPRDFISLDELIACCDVISLHVPITKTGEHKTWYLFDEARLNSLKQGTWLLNCCRGEVIDNQALIKVKLERPDIKLVLDVWEGEPNPMHELIPLVELATPHIAGYSLEGKARGTFMLYQKLMQVLGKDADKSMTALLPSLWSVQLDVESIPDQKSLLQLARFIYDLRDDDELFRKTILDDSSKNPQVNSLNNNGFDLMRKNHLHRREFSALRLVNTGHSDVNWLTNLGFSGIGQ.

Asp34 contributes to the NAD(+) binding site. The active site involves Arg95. NAD(+) is bound at residue Asp119. Residue Glu124 is part of the active site. The Proton donor role is filled by His141. Position 144 (Gly144) interacts with NAD(+). Position 145 (Tyr145) interacts with substrate.

The protein belongs to the D-isomer specific 2-hydroxyacid dehydrogenase family. PdxB subfamily. In terms of assembly, homodimer.

It localises to the cytoplasm. The enzyme catalyses 4-phospho-D-erythronate + NAD(+) = (R)-3-hydroxy-2-oxo-4-phosphooxybutanoate + NADH + H(+). Its pathway is cofactor biosynthesis; pyridoxine 5'-phosphate biosynthesis; pyridoxine 5'-phosphate from D-erythrose 4-phosphate: step 2/5. In terms of biological role, catalyzes the oxidation of erythronate-4-phosphate to 3-hydroxy-2-oxo-4-phosphonooxybutanoate. The sequence is that of Erythronate-4-phosphate dehydrogenase (pdxB) from Shewanella sp. (strain DB6705).